The chain runs to 319 residues: Large ribosomal subunit protein eL8 (319 aa).

An N6-acetyllysine modification is found at lysine 87. A Glycyl lysine isopeptide (Lys-Gly) (interchain with G-Cter in SUMO2) cross-link involves residue lysine 101. N6-acetyllysine; alternate is present on lysine 150. Lysine 150 is covalently cross-linked (Glycyl lysine isopeptide (Lys-Gly) (interchain with G-Cter in SUMO2); alternate). Lysine 178 participates in a covalent cross-link: Glycyl lysine isopeptide (Lys-Gly) (interchain with G-Cter in SUMO2). Lysine 270 is modified (N6-acetyllysine). Lysine 298 participates in a covalent cross-link: Glycyl lysine isopeptide (Lys-Gly) (interchain with G-Cter in SUMO2).

This sequence belongs to the eukaryotic ribosomal protein eL8 family. As to quaternary structure, component of the large ribosomal subunit. Interacts with CRY1. Interacts with DICER1, AGO2, TARBP2, MOV10 and EIF6; they form a large RNA-induced silencing complex (RISC).

Its subcellular location is the cytoplasm. Its function is as follows. Component of the large ribosomal subunit. The ribosome is a large ribonucleoprotein complex responsible for the synthesis of proteins in the cell. This is Large ribosomal subunit protein eL8 (RPL7A) from Oryctolagus cuniculus (Rabbit).